Consider the following 176-residue polypeptide: Inorganic pyrophosphatase (176 aa).

3 residues coordinate substrate: Lys31, Arg45, and Tyr57. The Mg(2+) site is built by Asp67, Asp72, and Asp104. Tyr142 lines the substrate pocket.

It belongs to the PPase family. As to quaternary structure, homohexamer. Mg(2+) serves as cofactor.

It is found in the cytoplasm. It catalyses the reaction diphosphate + H2O = 2 phosphate + H(+). Functionally, catalyzes the hydrolysis of inorganic pyrophosphate (PPi) forming two phosphate ions. This Haemophilus influenzae (strain ATCC 51907 / DSM 11121 / KW20 / Rd) protein is Inorganic pyrophosphatase.